Consider the following 545-residue polypeptide: Pectinesterase/pectinesterase inhibitor (545 aa).

The N-terminal stretch at 1 to 37 is a signal peptide; sequence MEINQPNLLEASKSCYSKITFFLLVISFAALVSTGFS. The segment at 38-191 is pectinesterase inhibitor; that stretch reads SPELSLHHKI…ILRARTSLAI (154 aa). Positions 38-228 are excised as a propeptide; sequence SPELSLHHKI…RRLLQTLGKD (191 aa). N-linked (GlcNAc...) asparagine glycosylation occurs at asparagine 135. The segment at 232–530 is pectinesterase; that stretch reads DIVVAKDGSG…TVAELIQGGS (299 aa). Residues threonine 307 and glutamine 337 each contribute to the substrate site. An intrachain disulfide couples cysteine 326 to cysteine 353. Aspartate 360 acts as the Proton donor; for pectinesterase activity in catalysis. The N-linked (GlcNAc...) (complex) asparagine glycan is linked to asparagine 375. The active-site Nucleophile; for pectinesterase activity is aspartate 381. Residues cysteine 394 and cysteine 428 are joined by a disulfide bond. Substrate is bound by residues arginine 449 and tryptophan 451.

This sequence in the N-terminal section; belongs to the PMEI family. In the C-terminal section; belongs to the pectinesterase family. Post-translationally, N-glycosylated.

It localises to the secreted. The protein localises to the cell wall. The enzyme catalyses [(1-&gt;4)-alpha-D-galacturonosyl methyl ester](n) + n H2O = [(1-&gt;4)-alpha-D-galacturonosyl](n) + n methanol + n H(+). It functions in the pathway glycan metabolism; pectin degradation; 2-dehydro-3-deoxy-D-gluconate from pectin: step 1/5. Its function is as follows. Acts in the modification of cell walls via demethylesterification of cell wall pectin. The protein is Pectinesterase/pectinesterase inhibitor of Ficus pumila var. awkeotsang (Jelly fig).